The chain runs to 83 residues: Cytochrome b559 subunit alpha (83 aa).

The helical transmembrane segment at valine 21–tryptophan 35 threads the bilayer. Heme is bound at residue histidine 23.

Belongs to the PsbE/PsbF family. In terms of assembly, heterodimer of an alpha subunit and a beta subunit. PSII is composed of 1 copy each of membrane proteins PsbA, PsbB, PsbC, PsbD, PsbE, PsbF, PsbH, PsbI, PsbJ, PsbK, PsbL, PsbM, PsbT, PsbX, PsbY, PsbZ, Psb30/Ycf12, at least 3 peripheral proteins of the oxygen-evolving complex and a large number of cofactors. It forms dimeric complexes. It depends on heme b as a cofactor.

It is found in the plastid. The protein localises to the chloroplast thylakoid membrane. Functionally, this b-type cytochrome is tightly associated with the reaction center of photosystem II (PSII). PSII is a light-driven water:plastoquinone oxidoreductase that uses light energy to abstract electrons from H(2)O, generating O(2) and a proton gradient subsequently used for ATP formation. It consists of a core antenna complex that captures photons, and an electron transfer chain that converts photonic excitation into a charge separation. This Liriodendron tulipifera (Tuliptree) protein is Cytochrome b559 subunit alpha.